A 301-amino-acid polypeptide reads, in one-letter code: Glycine--tRNA ligase alpha subunit (301 aa).

This sequence belongs to the class-II aminoacyl-tRNA synthetase family. As to quaternary structure, tetramer of two alpha and two beta subunits.

The protein resides in the cytoplasm. The enzyme catalyses tRNA(Gly) + glycine + ATP = glycyl-tRNA(Gly) + AMP + diphosphate. This chain is Glycine--tRNA ligase alpha subunit, found in Shewanella baltica (strain OS223).